A 232-amino-acid polypeptide reads, in one-letter code: Ribonuclease 3 (232 aa).

One can recognise an RNase III domain in the interval 7–135 (IQAVESKLKF…ILGAVYLDGG (129 aa)). Mg(2+) is bound at residue glutamate 48. Residue aspartate 52 is part of the active site. Mg(2+) is bound by residues asparagine 121 and glutamate 124. Glutamate 124 is a catalytic residue. A DRBM domain is found at 160–229 (NPKNRLQQFT…AKQALSTHDD (70 aa)).

It belongs to the ribonuclease III family. As to quaternary structure, homodimer. It depends on Mg(2+) as a cofactor.

It is found in the cytoplasm. It catalyses the reaction Endonucleolytic cleavage to 5'-phosphomonoester.. Digests double-stranded RNA. Involved in the processing of primary rRNA transcript to yield the immediate precursors to the large and small rRNAs (23S and 16S). Processes some mRNAs, and tRNAs when they are encoded in the rRNA operon. Processes pre-crRNA and tracrRNA of type II CRISPR loci if present in the organism. The sequence is that of Ribonuclease 3 from Chlamydia muridarum (strain MoPn / Nigg).